Consider the following 55-residue polypeptide: Large ribosomal subunit protein bL33 (55 aa).

Belongs to the bacterial ribosomal protein bL33 family.

This chain is Large ribosomal subunit protein bL33, found in Rhodopseudomonas palustris (strain BisA53).